A 95-amino-acid polypeptide reads, in one-letter code: Small ribosomal subunit protein bS6 (95 aa).

This sequence belongs to the bacterial ribosomal protein bS6 family.

Binds together with bS18 to 16S ribosomal RNA. The polypeptide is Small ribosomal subunit protein bS6 (Shouchella clausii (strain KSM-K16) (Alkalihalobacillus clausii)).